A 359-amino-acid chain; its full sequence is Guanine nucleotide-binding protein subunit alpha-11 (359 aa).

S-palmitoyl cysteine attachment occurs at residues Cys-9 and Cys-10. Positions 38-359 (RELKLLLLGT…QHNLKEYNLV (322 aa)) constitute a G-alpha domain. The tract at residues 41-54 (KLLLLGTGESGKST) is G1 motif. GTP contacts are provided by residues 46–53 (GTGESGKS) and 180–183 (LRVR). Ser-53 serves as a coordination point for Mg(2+). The G2 motif stretch occupies residues 178–186 (DVLRVRVPT). Thr-186 is a binding site for Mg(2+). The interval 201 to 210 (FRMVDVGGQR) is G3 motif. The tract at residues 270-277 (ILFLNKKD) is G4 motif. GTP contacts are provided by residues 274–277 (NKKD) and Ala-331. The G5 motif stretch occupies residues 329–334 (TCATDT).

The protein belongs to the G-alpha family. G(q) subfamily. G proteins are composed of 3 units; alpha, beta and gamma. The alpha chain contains the guanine nucleotide binding site.

It localises to the cell membrane. The protein localises to the cytoplasm. The enzyme catalyses GTP + H2O = GDP + phosphate + H(+). Guanine nucleotide-binding proteins (G proteins) function as transducers downstream of G protein-coupled receptors (GPCRs) in numerous signaling cascades. The alpha chain contains the guanine nucleotide binding site and alternates between an active, GTP-bound state and an inactive, GDP-bound state. Signaling by an activated GPCR promotes GDP release and GTP binding. The alpha subunit has a low GTPase activity that converts bound GTP to GDP, thereby terminating the signal. Both GDP release and GTP hydrolysis are modulated by numerous regulatory proteins. Signaling is mediated via phospholipase C-beta-dependent inositol lipid hydrolysis for signal propagation: activates phospholipase C-beta: following GPCR activation, GNA11 activates PLC-beta (PLCB1, PLCB2, PLCB3 or PLCB4), leading to production of diacylglycerol (DAG) and inositol 1,4,5-trisphosphate (IP3). In Xenopus laevis (African clawed frog), this protein is Guanine nucleotide-binding protein subunit alpha-11 (gna11).